A 99-amino-acid chain; its full sequence is Integration host factor subunit alpha (99 aa).

The segment at 49–75 is disordered; sequence FGNFDLRDKNQRPGRNPKTGEDIPITA.

It belongs to the bacterial histone-like protein family. Heterodimer of an alpha and a beta chain.

Its function is as follows. This protein is one of the two subunits of integration host factor, a specific DNA-binding protein that functions in genetic recombination as well as in transcriptional and translational control. This Salmonella agona (strain SL483) protein is Integration host factor subunit alpha.